The following is a 230-amino-acid chain: Uracil-DNA glycosylase (230 aa).

The active-site Proton acceptor is D65.

Belongs to the uracil-DNA glycosylase (UDG) superfamily. UNG family.

The protein resides in the cytoplasm. The enzyme catalyses Hydrolyzes single-stranded DNA or mismatched double-stranded DNA and polynucleotides, releasing free uracil.. Excises uracil residues from the DNA which can arise as a result of misincorporation of dUMP residues by DNA polymerase or due to deamination of cytosine. The sequence is that of Uracil-DNA glycosylase from Pediococcus pentosaceus (strain ATCC 25745 / CCUG 21536 / LMG 10740 / 183-1w).